The sequence spans 209 residues: Orotate phosphoribosyltransferase (209 aa).

5-phospho-alpha-D-ribose 1-diphosphate-binding positions include R96, K100, H102, and 122-130 (EDLISTGKS). S126 lines the orotate pocket.

It belongs to the purine/pyrimidine phosphoribosyltransferase family. PyrE subfamily. In terms of assembly, homodimer. Mg(2+) serves as cofactor.

The enzyme catalyses orotidine 5'-phosphate + diphosphate = orotate + 5-phospho-alpha-D-ribose 1-diphosphate. It functions in the pathway pyrimidine metabolism; UMP biosynthesis via de novo pathway; UMP from orotate: step 1/2. Catalyzes the transfer of a ribosyl phosphate group from 5-phosphoribose 1-diphosphate to orotate, leading to the formation of orotidine monophosphate (OMP). The polypeptide is Orotate phosphoribosyltransferase (Coxiella burnetii (strain RSA 493 / Nine Mile phase I)).